The following is a 252-amino-acid chain: Fatty acid elongase 4 (252 aa).

The chain crosses the membrane as a helical span at residues 25–45 (LVSWHALVLGHLLYLFVVFVM). Asn-56 carries N-linked (GlcNAc...) asparagine glycosylation. A helical membrane pass occupies residues 60-80 (VLVVYNVLQICLSAAMAINLS). A glycan (N-linked (GlcNAc...) asparagine) is linked at Asn-89. Helical transmembrane passes span 100–120 (FWMFVHYCSKYIDMLDTVFIL), 127–147 (QLSFLHVYHHCTIGLIWGILL), 150–170 (GLANGTAFFGTWINSSVHFLM), 187–207 (FLLTKIQMLQFSLCILHAILV), and 214–234 (FTLGWNLLQLLYNASLLVLFL). Residues 132 to 136 (HVYHH) carry the HxxHH motif motif. The Nucleophile role is filled by His-135.

It belongs to the ELO family.

The protein localises to the membrane. The catalysed reaction is (5Z,8Z,11Z,14Z)-eicosatetraenoyl-CoA + malonyl-CoA + H(+) = (7Z,10Z,13Z,16Z)-3-oxodocosatetraenoyl-CoA + CO2 + CoA. Its pathway is lipid metabolism; fatty acid biosynthesis. In terms of biological role, involved in the synthesis of fatty acids. Elongates arachidonate and other C20 polyunsaturated fatty acids (PUFAs) with a preference for n-6 PUFAs. Not involved in fatty acid synthesis up to C18. The chain is Fatty acid elongase 4 from Trypanosoma brucei brucei (strain 927/4 GUTat10.1).